Reading from the N-terminus, the 99-residue chain is Large ribosomal subunit protein bL28 (99 aa).

The protein belongs to the bacterial ribosomal protein bL28 family.

In Caulobacter vibrioides (strain ATCC 19089 / CIP 103742 / CB 15) (Caulobacter crescentus), this protein is Large ribosomal subunit protein bL28.